A 703-amino-acid polypeptide reads, in one-letter code: Calpain-8 (703 aa).

The region spanning 45–344 is the Calpain catalytic domain; that stretch reads LFKDPEFPAC…FSRLEICNLS (300 aa). Active-site residues include Cys105, His262, and Asn286. A domain III region spans residues 355–512; it reads KWNLVLFNGR…VFSEKKAQAL (158 aa). The tract at residues 513-531 is linker; it reads EIGDAVPGDPHEPHPRDMD. EF-hand domains are found at residues 531 to 566, 575 to 610, 605 to 640, and 670 to 703; these read DGEDEHFWSLSEEFADKDSEISAHQLKRVLNGLLSK, FNINTCREMISLLDGDGTGSLRPVEFKTLWLKICKY, LKICKYLEIYQEMDHSRAGTIDAHEMRTALKKAGFT, and IRLEILFKLFRLLDKDQNGIVQLSLAEWLCRALV. Residues 532–703 are domain IV; it reads GEDEHFWSLS…LAEWLCRALV (172 aa). Residues Asp588, Asp590, Thr592, Ser594, Glu599, Asp618, Ser620, Thr624, and Glu629 each contribute to the Ca(2+) site.

The protein belongs to the peptidase C2 family. As to quaternary structure, monomer and homooligomer. Interacts with COPS1/GPS1, COPB1, EYA2, NME2, NME4 and TOMM70. Ca(2+) serves as cofactor. In terms of processing, undergoes autolytic cleavage between Ala-5 and Ala-6 which gives rise to fragments extending from Ala-6 to the C-terminus, Ala-6 to the EF-hand 2 domain and from Ala-6 to the beginning of domain III. Predominantly expressed in the stomach. Localizes strictly to the surface mucus cells in the gastric epithelium and the mucus-secreting goblet cells in the duodenum.

The protein resides in the cytoplasm. The protein localises to the golgi apparatus. The catalysed reaction is Broad endopeptidase specificity.. The concentration of calcium for half-maximal activity is 0.3 mM. Inhibited by calpastatin and calpeptin. In terms of biological role, calcium-regulated non-lysosomal thiol-protease. Involved in membrane trafficking in the gastric surface mucus cells (pit cells) and may involve the membrane trafficking of mucus cells via interactions with coat protein. Proteolytically cleaves the beta-subunit of coatomer complex. This chain is Calpain-8 (Capn8), found in Mus musculus (Mouse).